A 47-amino-acid chain; its full sequence is NADH dehydrogenase [ubiquinone] iron-sulfur protein 2 (47 aa).

Belongs to the complex I 49 kDa subunit family. In terms of assembly, complex I is composed of about 45 different subunits. This is a component of the iron-sulfur (IP) fragment of the enzyme.

The protein resides in the mitochondrion inner membrane. The enzyme catalyses a ubiquinone + NADH + 5 H(+)(in) = a ubiquinol + NAD(+) + 4 H(+)(out). Its function is as follows. Core subunit of the mitochondrial membrane respiratory chain NADH dehydrogenase (Complex I) that is believed to belong to the minimal assembly required for catalysis. Complex I functions in the transfer of electrons from NADH to the respiratory chain. The immediate electron acceptor for the enzyme is believed to be ubiquinone. Component of the iron-sulfur (IP) fragment of the enzyme. This is NADH dehydrogenase [ubiquinone] iron-sulfur protein 2 (NAD7) from Solanum tuberosum (Potato).